A 344-amino-acid polypeptide reads, in one-letter code: Methionine import ATP-binding protein MetN (344 aa).

Residues 2–241 form the ABC transporter domain; it reads IELKNIGKQF…PTTQLAQQFI (240 aa). 38 to 45 is an ATP binding site; that stretch reads GASGAGKS.

It belongs to the ABC transporter superfamily. Methionine importer (TC 3.A.1.24) family. The complex is composed of two ATP-binding proteins (MetN), two transmembrane proteins (MetI) and a solute-binding protein (MetQ).

Its subcellular location is the cell inner membrane. It catalyses the reaction L-methionine(out) + ATP + H2O = L-methionine(in) + ADP + phosphate + H(+). The catalysed reaction is D-methionine(out) + ATP + H2O = D-methionine(in) + ADP + phosphate + H(+). Its function is as follows. Part of the ABC transporter complex MetNIQ involved in methionine import. Responsible for energy coupling to the transport system. This Haemophilus ducreyi (strain 35000HP / ATCC 700724) protein is Methionine import ATP-binding protein MetN.